A 343-amino-acid chain; its full sequence is SH2 domain-containing adapter protein D (343 aa).

A disordered region spans residues 1–176 (MAKWLRDYLN…PADEYDQPWE (176 aa)). 2 stretches are compositionally biased toward basic and acidic residues: residues 29–40 (DILRAYREQKDL) and 73–82 (IKVEAADMAR). Residues 92-102 (EEPEAETEYSD) show a composition bias toward acidic residues. Residues 160 to 176 (RPLEDERPADEYDQPWE) are compositionally biased toward basic and acidic residues. One can recognise an SH2 domain in the interval 225–320 (WFHGPLSRAE…AEHLALLYPV (96 aa)). The interval 322-343 (SSQSSQGPCTLAAKPERGQGDP) is disordered.

Post-translationally, tyrosine phosphorylated by ABL. In terms of tissue distribution, specifically expressed in brain.

Its function is as follows. May function as an adapter protein. The polypeptide is SH2 domain-containing adapter protein D (Shd) (Mus musculus (Mouse)).